Reading from the N-terminus, the 28-residue chain is Short cationic peptide-1b (28 aa).

Glutamic acid 1-amide is present on E28.

In terms of tissue distribution, expressed by the venom gland.

It localises to the secreted. This chain is Short cationic peptide-1b, found in Cupiennius salei (American wandering spider).